A 449-amino-acid polypeptide reads, in one-letter code: 1H-pyrrole-2-carbonyl-[peptidyl-carrier protein] chlorinase (449 aa).

FAD contacts are provided by Ala16, Glu35, Arg41, His43, Val44, Ser47, Arg123, Ile147, and Asp316. Ser327 and Gly328 together coordinate chloride. Val329 contributes to the FAD binding site.

It belongs to the flavin-dependent halogenase family. As to quaternary structure, homodimer.

It carries out the reaction (1H-pyrrole-2-carbonyl)-[peptidyl-carrier protein] + 2 FADH2 + 2 chloride + 2 O2 = (4,5-dichloro-1H-pyrrole-2-carbonyl)-[peptidyl-carrier protein] + 2 FAD + 4 H2O. The catalysed reaction is (1H-pyrrole-2-carbonyl)-[peptidyl-carrier protein] + FADH2 + chloride + O2 = (5-chloro-1H-pyrrole-2-carbonyl)-[peptidyl-carrier protein] + FAD + 2 H2O. The enzyme catalyses (5-chloro-1H-pyrrole-2-carbonyl)-[peptidyl-carrier protein] + FADH2 + chloride + O2 = (4,5-dichloro-1H-pyrrole-2-carbonyl)-[peptidyl-carrier protein] + FAD + 2 H2O. Its pathway is antibiotic biosynthesis. Functionally, involved in the biosynthesis of the antibiotic pyoluteorin. Catalyzes the dichlorination of the pyrrole ring of pyrrolyl-S-PltL, generating the 5-chloropyrrolyl-S-PltL intermediate and then the 4,5-dichloropyrrolyl-S-PltL product. In Pseudomonas fluorescens (strain ATCC BAA-477 / NRRL B-23932 / Pf-5), this protein is 1H-pyrrole-2-carbonyl-[peptidyl-carrier protein] chlorinase.